Here is a 76-residue protein sequence, read N- to C-terminus: Omega-conotoxin MoVIA (76 aa).

The signal sequence occupies residues 1–22; it reads MKLTCVVIVAVLFLTACQLITA. Residues 23–45 constitute a propeptide that is removed on maturation; the sequence is DDSRSTQRHRALRSTTKLSMSTR. Cystine bridges form between Cys46–Cys61, Cys53–Cys64, and Cys60–Cys71. Residues Pro49 and Pro55 each carry the hydroxyproline modification.

The protein belongs to the conotoxin O1 superfamily. In terms of tissue distribution, expressed by the venom duct.

The protein localises to the secreted. Functionally, omega-conotoxins act at presynaptic membranes, they bind and block voltage-gated calcium channels (Cav). This toxin potently blocks mammalian N-type calcium channels (Cav2.2/CACNA1B) (IC(50)=330 nM on human channels). It is 9-fold more potent in displacing radiolabeled omega-conotoxin GVIA from fish brain membranes than from human SH-SY5Y cells. Its function is as follows. Omega-conotoxins act at presynaptic membranes, they bind and block voltage-gated calcium channels (Cav). This toxin potently blocks mammalian N-type calcium channels (Cav2.2/CACNA1B) (IC(50)=600 nM on human channels). It is 60-fold more potent in displacing radiolabeled omega-conotoxin GVIA from fish brain membranes than from human SH-SY5Y cells. In vivo, when tested on rat neuropathic pain model, this toxin shows an analgesic activity. This is Omega-conotoxin MoVIA from Conus moncuri (Sea snail).